Consider the following 513-residue polypeptide: ATP synthase subunit alpha 1 (513 aa).

An ATP-binding site is contributed by Gly169–Thr176.

This sequence belongs to the ATPase alpha/beta chains family. F-type ATPases have 2 components, CF(1) - the catalytic core - and CF(0) - the membrane proton channel. CF(1) has five subunits: alpha(3), beta(3), gamma(1), delta(1), epsilon(1). CF(0) has three main subunits: a(1), b(2) and c(9-12). The alpha and beta chains form an alternating ring which encloses part of the gamma chain. CF(1) is attached to CF(0) by a central stalk formed by the gamma and epsilon chains, while a peripheral stalk is formed by the delta and b chains.

Its subcellular location is the cell inner membrane. The enzyme catalyses ATP + H2O + 4 H(+)(in) = ADP + phosphate + 5 H(+)(out). Its function is as follows. Produces ATP from ADP in the presence of a proton gradient across the membrane. The alpha chain is a regulatory subunit. The polypeptide is ATP synthase subunit alpha 1 (Photobacterium profundum (strain SS9)).